Consider the following 1091-residue polypeptide: Neural cell adhesion molecule 1 (1091 aa).

Positions 1 to 19 (MLPAAALPWTLFFLGAAAS) are cleaved as a signal peptide. Ig-like C2-type domains are found at residues 20 to 113 (LQVD…VNVK), 116 to 205 (QKLM…KDIQ), 212 to 301 (PSVR…ATIH), 308 to 403 (PKIT…LEVQ), and 406 to 495 (PKLQ…FILV). The Extracellular segment spans residues 20–711 (LQVDIVPSQG…STSPTSGLGT (692 aa)). 2 cysteine pairs are disulfide-bonded: C41–C96 and C139–C189. Heparin-binding positions include 152 to 156 (KHKGR) and 161 to 165 (KKDVR). A glycan (N-linked (GlcNAc...) asparagine) is linked at N222. C235 and C287 are joined by a disulfide. N-linked (GlcNAc...) asparagine glycans are attached at residues N315, N347, N423, N449, and N478. C329 and C385 are joined by a disulfide. Residues C426 and C479 are joined by a disulfide bond. 2 Fibronectin type-III domains span residues 499-598 (TPSS…TQPV) and 600-696 (EPSA…SAQP). A helical membrane pass occupies residues 712–729 (AAIVGILIVIFVLLLVAV). The Cytoplasmic portion of the chain corresponds to 730-1091 (DVTCYFLNKC…ATEIRHLQQK (362 aa)). Disordered stretches follow at residues 756-809 (GAKG…TEPE), 840-916 (ATAQ…NNLS), 937-1023 (ETSK…GTFK), and 1041-1091 (TPAS…LQQK). Basic and acidic residues predominate over residues 758–799 (KGKDMEEGKAAFSKDESKEPIVEVRTEEERTPNHDGGKHTEP). Low complexity predominate over residues 845–856 (SPTSETTTLTSS). Polar residues-rich tracts occupy residues 904 to 916 (DTPS…NNLS) and 980 to 1012 (QPST…PSQN). Composition is skewed to basic and acidic residues over residues 1013-1023 (EDFKMDEGTFK) and 1068-1091 (KTEK…LQQK).

In terms of processing, polysialylated by ST8SIA2 and ST8SIA4. Polysialylation modulates cell interactions by confering both attractive and repulsive properties that are highly regulated by ST8SIA2 and ST8SIA4. Polysialylation is formed on a-2,3-linked sialic acid of core glycans.

It is found in the cell membrane. Its function is as follows. This protein is a cell adhesion molecule involved in neuron-neuron adhesion, neurite fasciculation, outgrowth of neurites, etc. The sequence is that of Neural cell adhesion molecule 1 from Gallus gallus (Chicken).